The chain runs to 504 residues: L-carnitine/gamma-butyrobetaine antiporter (504 aa).

Transmembrane regions (helical) follow at residues 10 to 30, 51 to 71, 92 to 112, 143 to 163, 195 to 215, 231 to 251, 263 to 283, 316 to 336, 347 to 367, 398 to 418, 446 to 466, and 475 to 495; these read IEPK…WLTV, WGWA…WLVF, IFMM…SIEI, GPLP…FFFV, FYLV…TPLV, LDAI…ACGL, SYLS…SFIM, WTVF…IFLA, LCFG…TVLG, WAAL…CFIA, LLVR…LLAL, and AIIA…LSFI.

This sequence belongs to the BCCT transporter (TC 2.A.15) family. CaiT subfamily. As to quaternary structure, homotrimer.

Its subcellular location is the cell inner membrane. It catalyses the reaction 4-(trimethylamino)butanoate(in) + (R)-carnitine(out) = 4-(trimethylamino)butanoate(out) + (R)-carnitine(in). It participates in amine and polyamine metabolism; carnitine metabolism. Catalyzes the exchange of L-carnitine for gamma-butyrobetaine. This Escherichia coli O81 (strain ED1a) protein is L-carnitine/gamma-butyrobetaine antiporter.